The following is a 320-amino-acid chain: Protein MRG1 (320 aa).

Positions 1–28 are disordered; the sequence is MGSSSKEETASDGDTASGGASPSNDGRL. The span at 12–24 shows a compositional bias: polar residues; that stretch reads DGDTASGGASPSN. The region spanning 30–80 is the Tudor-knot domain; sequence SEGERVLAYHGPRVYGAKVQKVELRKKEWKYFVHYLGWNKNWDEWVSADRL. A compositionally biased stretch (basic and acidic residues) spans 93–104; sequence ALDKKQGVEKGT. The tract at residues 93–147 is disordered; the sequence is ALDKKQGVEKGTKSGRSAQTKTRSSADTKADKDDTKTNAAKGKKRKHESGNEKDN. The span at 106–115 shows a compositional bias: polar residues; it reads SGRSAQTKTR. Basic and acidic residues predominate over residues 116-128; sequence SSADTKADKDDTK. An MRG domain is found at 150–318; sequence AEKLMKIQIP…KVSDGKGKGK (169 aa).

Interacts with HAM1 and HAM2. Interacts (via MRG domain) with CO. Component of the NuA4 histone acetyltransferase complex. Ubiquitous. Mainly expressed in the vasculature of cotyledons and leaves, and in roots and inflorescences.

Its subcellular location is the nucleus. Chromatin remodeling factor. Acts as a 'reader' protein by binding to H3K36me3 and H3K36me3 to control histone H4 acetylation. Increases the transcriptional levels of the flowering time genes FLC and FT. Binds the chromatin at the FT promoter upon interaction with CO. In Arabidopsis thaliana (Mouse-ear cress), this protein is Protein MRG1.